Reading from the N-terminus, the 293-residue chain is Diaminopimelate epimerase (293 aa).

Substrate contacts are provided by Asn-17, Gln-47, and Asn-67. Cys-76 functions as the Proton donor in the catalytic mechanism. Residues 77–78, Asn-164, Asn-197, and 215–216 contribute to the substrate site; these read GN and ER. The Proton acceptor role is filled by Cys-224. Substrate is bound at residue 225 to 226; sequence GS.

This sequence belongs to the diaminopimelate epimerase family. Homodimer.

Its subcellular location is the cytoplasm. It catalyses the reaction (2S,6S)-2,6-diaminopimelate = meso-2,6-diaminopimelate. The protein operates within amino-acid biosynthesis; L-lysine biosynthesis via DAP pathway; DL-2,6-diaminopimelate from LL-2,6-diaminopimelate: step 1/1. Functionally, catalyzes the stereoinversion of LL-2,6-diaminopimelate (L,L-DAP) to meso-diaminopimelate (meso-DAP), a precursor of L-lysine and an essential component of the bacterial peptidoglycan. In Rhodopseudomonas palustris (strain ATCC BAA-98 / CGA009), this protein is Diaminopimelate epimerase.